The sequence spans 420 residues: Pyrophosphate--fructose 6-phosphate 1-phosphotransferase (420 aa).

Gly-13 lines the diphosphate pocket. Residues 142–144 (TVD), 190–192 (MGR), Glu-247, and 297–300 (YLQR) each bind substrate. Asp-144 serves as the catalytic Proton acceptor.

Belongs to the phosphofructokinase type A (PFKA) family. PPi-dependent PFK group II subfamily. Clade 'B2' sub-subfamily. Homodimer. Mg(2+) is required as a cofactor. It depends on Co(2+) as a cofactor. The cofactor is Mn(2+).

The protein resides in the cytoplasm. The catalysed reaction is beta-D-fructose 6-phosphate + diphosphate = beta-D-fructose 1,6-bisphosphate + phosphate + H(+). It functions in the pathway carbohydrate degradation; glycolysis; D-glyceraldehyde 3-phosphate and glycerone phosphate from D-glucose: step 3/4. With respect to regulation, non-allosteric. In terms of biological role, catalyzes the phosphorylation of D-fructose 6-phosphate, the first committing step of glycolysis. Uses inorganic phosphate (PPi) as phosphoryl donor instead of ATP like common ATP-dependent phosphofructokinases (ATP-PFKs), which renders the reaction reversible, and can thus function both in glycolysis and gluconeogenesis. Consistently, PPi-PFK can replace the enzymes of both the forward (ATP-PFK) and reverse (fructose-bisphosphatase (FBPase)) reactions. This is Pyrophosphate--fructose 6-phosphate 1-phosphotransferase from Methylococcus capsulatus (strain ATCC 33009 / NCIMB 11132 / Bath).